The sequence spans 182 residues: Crossover junction endodeoxyribonuclease RuvC (182 aa).

Residues aspartate 7, glutamate 69, and aspartate 141 contribute to the active site. Residues aspartate 7, glutamate 69, and aspartate 141 each coordinate Mg(2+).

This sequence belongs to the RuvC family. As to quaternary structure, homodimer which binds Holliday junction (HJ) DNA. The HJ becomes 2-fold symmetrical on binding to RuvC with unstacked arms; it has a different conformation from HJ DNA in complex with RuvA. In the full resolvosome a probable DNA-RuvA(4)-RuvB(12)-RuvC(2) complex forms which resolves the HJ. Requires Mg(2+) as cofactor.

The protein localises to the cytoplasm. The catalysed reaction is Endonucleolytic cleavage at a junction such as a reciprocal single-stranded crossover between two homologous DNA duplexes (Holliday junction).. Its function is as follows. The RuvA-RuvB-RuvC complex processes Holliday junction (HJ) DNA during genetic recombination and DNA repair. Endonuclease that resolves HJ intermediates. Cleaves cruciform DNA by making single-stranded nicks across the HJ at symmetrical positions within the homologous arms, yielding a 5'-phosphate and a 3'-hydroxyl group; requires a central core of homology in the junction. The consensus cleavage sequence is 5'-(A/T)TT(C/G)-3'. Cleavage occurs on the 3'-side of the TT dinucleotide at the point of strand exchange. HJ branch migration catalyzed by RuvA-RuvB allows RuvC to scan DNA until it finds its consensus sequence, where it cleaves and resolves the cruciform DNA. The sequence is that of Crossover junction endodeoxyribonuclease RuvC from Paracidovorax citrulli (strain AAC00-1) (Acidovorax citrulli).